A 452-amino-acid polypeptide reads, in one-letter code: Transcription factor ETV6 (452 aa).

Lys11 carries the N6-acetyllysine; alternate modification. Lys11 participates in a covalent cross-link: Glycyl lysine isopeptide (Lys-Gly) (interchain with G-Cter in SUMO2); alternate. Thr18 is subject to Phosphothreonine. Ser22 is modified (phosphoserine). Residues 40–124 (ALRMEEDSIR…ELLQHILKQR (85 aa)) form the PNT domain. Residues 154–262 (EDNGVQRTSR…PRPSSPRQEG (109 aa)) form a disordered region. Polar residues predominate over residues 158–174 (VQRTSRPSAENVHQNPP). Residues Ser213, Ser238, and Ser257 each carry the phosphoserine modification. Lys288 is covalently cross-linked (Glycyl lysine isopeptide (Lys-Gly) (interchain with G-Cter in SUMO2)). Position 302 is an N6-acetyllysine; alternate (Lys302). Residue Lys302 forms a Glycyl lysine isopeptide (Lys-Gly) (interchain with G-Cter in SUMO2); alternate linkage. Ser323 is modified (phosphoserine). The segment at residues 339–420 (RLLWDYVYQL…PGQRLLFRFM (82 aa)) is a DNA-binding region (ETS). Residues Lys403 and Lys421 each participate in a glycyl lysine isopeptide (Lys-Gly) (interchain with G-Cter in SUMO2) cross-link.

Belongs to the ETS family. In terms of assembly, can form homodimers or heterodimers with TEL2 or FLI1. Interacts with L3MBTL1 and HDAC9.

Its subcellular location is the nucleus. Its function is as follows. Transcriptional repressor; binds to the DNA sequence 5'-CCGGAAGT-3'. Plays a role in hematopoiesis and malignant transformation. This chain is Transcription factor ETV6 (ETV6), found in Bos taurus (Bovine).